Reading from the N-terminus, the 326-residue chain is N-acetyl-gamma-glutamyl-phosphate reductase (326 aa).

Residue Cys-155 is part of the active site.

Belongs to the NAGSA dehydrogenase family. Type 1 subfamily.

Its subcellular location is the cytoplasm. It carries out the reaction N-acetyl-L-glutamate 5-semialdehyde + phosphate + NADP(+) = N-acetyl-L-glutamyl 5-phosphate + NADPH + H(+). Its pathway is amino-acid biosynthesis; L-arginine biosynthesis; N(2)-acetyl-L-ornithine from L-glutamate: step 3/4. Functionally, catalyzes the NADPH-dependent reduction of N-acetyl-5-glutamyl phosphate to yield N-acetyl-L-glutamate 5-semialdehyde. The polypeptide is N-acetyl-gamma-glutamyl-phosphate reductase (Shewanella sediminis (strain HAW-EB3)).